A 593-amino-acid polypeptide reads, in one-letter code: UvrABC system protein C (593 aa).

A GIY-YIG domain is found at 14-91; it reads DSPGCYLHKD…IQENMPKYNI (78 aa). One can recognise a UVR domain in the interval 196 to 231; sequence NKIVNGLTEKMKSAAMTMEFERAAEYRDLIEAISLL.

This sequence belongs to the UvrC family. In terms of assembly, interacts with UvrB in an incision complex.

Its subcellular location is the cytoplasm. In terms of biological role, the UvrABC repair system catalyzes the recognition and processing of DNA lesions. UvrC both incises the 5' and 3' sides of the lesion. The N-terminal half is responsible for the 3' incision and the C-terminal half is responsible for the 5' incision. The chain is UvrABC system protein C from Streptococcus agalactiae serotype V (strain ATCC BAA-611 / 2603 V/R).